Consider the following 233-residue polypeptide: C-type lectin domain family 2 member D5 (233 aa).

A disordered region spans residues 1–52 (MPSSAHLQDPPPLLSRTLTQNEGQTSLRQSSSCGPSAASASESLSGSTESRI). The Cytoplasmic segment spans residues 1-76 (MPSSAHLQDP…PLEYPAGLYC (76 aa)). Polar residues predominate over residues 16-29 (RTLTQNEGQTSLRQ). Residues 30–50 (SSSCGPSAASASESLSGSTES) are compositionally biased toward low complexity. A helical; Signal-anchor for type II membrane protein membrane pass occupies residues 77 to 97 (CYVVIIVLSVAVVALSVALSV). The Extracellular portion of the chain corresponds to 98–233 (KKTAQISTIN…KPNSYTSQCL (136 aa)). One can recognise a C-type lectin domain in the interval 119 to 228 (VGNKCFYFNE…KSICRKPNSY (110 aa)). Residue N132 is glycosylated (N-linked (GlcNAc...) asparagine).

The protein localises to the cell membrane. Lectin-type cell surface receptor. This chain is C-type lectin domain family 2 member D5 (Ocil), found in Rattus norvegicus (Rat).